The primary structure comprises 385 residues: MAAVVAATALKGRGARNARVLRGILSGATANKASQNRSRALQSHSSPECKEEPEPLSPELEYIPRKRGKNPMKAVGLAWYSLYTRTRLGYLFYRQQLRRARNRYPKGHSRTQPRLFNGVKVLPIPVLSDNYSYLIIDTQARLAVAVDPSDPQAVQASIEKEGVNLVAILCTHKHWDHSGGNRDLSRRHQDCRVYGSPQDSIPYLTHPLCHQDVVSVGRLQIRALATPGHTQGHLVYLLDGEPYEGPSCLFSGDLLFLSGCGRTFEGTAETMLSSLDTVLGLGDDTLLWPGHEYAEENLGFAGVVEPENLARERKMQWVQRQRMERKSTCPSTLGEERSYNPFLRTHCLVLQEALGPSPGPTGDDGCSRAQLLERLRQLKDLHKSK.

A compositionally biased stretch (polar residues) spans 31–42 (NKASQNRSRALQ). The segment at 31–57 (NKASQNRSRALQSHSSPECKEEPEPLS) is disordered. Residues His172, His174, Asp176, His177, His229, Asp253, and His291 each coordinate Zn(2+).

Belongs to the metallo-beta-lactamase superfamily. Glyoxalase II family. Zn(2+) serves as cofactor. In terms of processing, undergoes cleavage at the N-terminus.

The protein localises to the cell membrane. Its subcellular location is the mitochondrion. The enzyme catalyses a thioester + H2O = a thiol + a carboxylate + H(+). In terms of biological role, probable thioesterase that may play a role in cellular detoxification processes; it likely acts on a yet-unknown alpha-hydroxythioester substrate. In vitro, it is able to catalyze the hydrolysis of S-D-lactoyl-glutathione to form glutathione and D-lactic acid at very low rate, though this reaction is not physiologically relevant in vivo. This chain is Probable thioesterase PNKD (PNKD), found in Bos taurus (Bovine).